Reading from the N-terminus, the 115-residue chain is Promotilin (115 aa).

Positions 1 to 25 are cleaved as a signal peptide; sequence MLSRKATAILLVVHAAAMLASQTEG. Residues 43–73 form a disordered region; sequence RYKGQKKSLSVQQRSEEVGPVDPAEPREEKQ.

This sequence belongs to the motilin family.

It localises to the secreted. Functionally, plays an important role in the regulation of interdigestive gastrointestinal motility and indirectly causes rhythmic contraction of duodenal and colonic smooth muscle. The protein is Promotilin (MLN) of Ovis aries (Sheep).